The following is a 322-amino-acid chain: Heterogeneous nuclear ribonucleoprotein D-like (322 aa).

Positions 1-36 are disordered; sequence MTGTARSALPLPQSPARALRPSGAARAAPSLSPSRF. At Arg6 the chain carries Omega-N-methylarginine. The segment covering 14 to 36 has biased composition (low complexity); the sequence is SPARALRPSGAARAAPSLSPSRF. RRM domains are found at residues 51 to 133 and 136 to 215; these read NKMF…KGKE and KKVF…QPKE. At Lys64 the chain carries N6-methyllysine. Lys112 is covalently cross-linked (Glycyl lysine isopeptide (Lys-Gly) (interchain with G-Cter in SUMO2)). Lys119 carries the post-translational modification N6-acetyllysine. Ser144 is subject to Phosphoserine. Disordered stretches follow at residues 216 to 251 and 299 to 322; these read VYRQ…NWNQ and SGQQ…YQPY. Over residues 226-245 the composition is skewed to gly residues; that stretch reads GGRGAAAGGRGGARGRGRGQ. The necessary for interaction with TNPO1 stretch occupies residues 245–322; that stretch reads QGQNWNQGFN…GNHQNNYQPY (78 aa). Arg310 carries the dimethylated arginine; alternate modification. Arg310 is modified (omega-N-methylarginine; alternate).

Interacts with TNPO1 and ZNF148. Post-translationally, dimethylation of Arg-310 is probably of the asymmetric type.

It is found in the nucleus. The protein localises to the cytoplasm. Its function is as follows. Acts as a transcriptional regulator. Promotes transcription repression. Promotes transcription activation in differentiated myotubes. Binds to double- and single-stranded DNA sequences. Binds to the transcription suppressor CATR sequence of the COX5B promoter. Binds with high affinity to RNA molecules that contain AU-rich elements (AREs) found within the 3'-UTR of many proto-oncogenes and cytokine mRNAs. Binds both to nuclear and cytoplasmic poly(A) mRNAs. Binds to poly(G) and poly(A), but not to poly(U) or poly(C) RNA homopolymers. Binds to the 5'-ACUAGC-3' RNA consensus sequence. In Rattus norvegicus (Rat), this protein is Heterogeneous nuclear ribonucleoprotein D-like (Hnrnpdl).